The sequence spans 403 residues: CCA-adding enzyme (403 aa).

Gly-32 and Arg-35 together coordinate ATP. Residues Gly-32 and Arg-35 each coordinate CTP. Mg(2+) contacts are provided by Asp-45 and Asp-47. Arg-116, Asp-159, Arg-162, Arg-165, and Arg-168 together coordinate ATP. Arg-116, Asp-159, Arg-162, Arg-165, and Arg-168 together coordinate CTP.

It belongs to the tRNA nucleotidyltransferase/poly(A) polymerase family. Bacterial CCA-adding enzyme type 3 subfamily. As to quaternary structure, homodimer. It depends on Mg(2+) as a cofactor.

The catalysed reaction is a tRNA precursor + 2 CTP + ATP = a tRNA with a 3' CCA end + 3 diphosphate. The enzyme catalyses a tRNA with a 3' CCA end + 2 CTP + ATP = a tRNA with a 3' CCACCA end + 3 diphosphate. In terms of biological role, catalyzes the addition and repair of the essential 3'-terminal CCA sequence in tRNAs without using a nucleic acid template. Adds these three nucleotides in the order of C, C, and A to the tRNA nucleotide-73, using CTP and ATP as substrates and producing inorganic pyrophosphate. tRNA 3'-terminal CCA addition is required both for tRNA processing and repair. Also involved in tRNA surveillance by mediating tandem CCA addition to generate a CCACCA at the 3' terminus of unstable tRNAs. While stable tRNAs receive only 3'-terminal CCA, unstable tRNAs are marked with CCACCA and rapidly degraded. This chain is CCA-adding enzyme, found in Limosilactobacillus reuteri (strain DSM 20016) (Lactobacillus reuteri).